The sequence spans 202 residues: Regulator of G-protein signaling 16 (202 aa).

Residues Cys2 and Cys12 are each lipidated (S-palmitoyl cysteine). One can recognise an RGS domain in the interval 65-181 (SFDLLLSSKN…LKSPAYRDLA (117 aa)). Tyr168 carries the phosphotyrosine; by EGFR modification. Residue Tyr177 is modified to Phosphotyrosine. A disordered region spans residues 183–202 (QATAASASPSSSSPAEPLHT).

As to quaternary structure, interacts with GNAI1 and GNAQ. Interacts with GNAI3, GNAI3 and GNAO1. Post-translationally, palmitoylated on Cys-2 and/or Cys-12. Phosphorylated. Phosphorylation at Tyr-168 by EGFR enhances GTPase accelerating (GAP) activity toward GNAI1.

The protein resides in the membrane. Regulates G protein-coupled receptor signaling cascades. Inhibits signal transduction by increasing the GTPase activity of G protein alpha subunits, thereby driving them into their inactive GDP-bound form. Plays an important role in the phototransduction cascade by regulating the lifetime and effective concentration of activated transducin alpha. May regulate extra and intracellular mitogenic signals. The chain is Regulator of G-protein signaling 16 (RGS16) from Bos taurus (Bovine).